A 161-amino-acid chain; its full sequence is Phosphopantetheine adenylyltransferase (161 aa).

Threonine 11 lines the substrate pocket. ATP is bound by residues 11–12 (TF) and histidine 19. Positions 43, 75, and 89 each coordinate substrate. Residues 90–92 (GLR), glutamate 100, and 125–131 (YSFLSSS) each bind ATP.

This sequence belongs to the bacterial CoaD family. In terms of assembly, homohexamer. The cofactor is Mg(2+).

The protein localises to the cytoplasm. The enzyme catalyses (R)-4'-phosphopantetheine + ATP + H(+) = 3'-dephospho-CoA + diphosphate. It participates in cofactor biosynthesis; coenzyme A biosynthesis; CoA from (R)-pantothenate: step 4/5. Its function is as follows. Reversibly transfers an adenylyl group from ATP to 4'-phosphopantetheine, yielding dephospho-CoA (dPCoA) and pyrophosphate. This chain is Phosphopantetheine adenylyltransferase, found in Listeria innocua serovar 6a (strain ATCC BAA-680 / CLIP 11262).